We begin with the raw amino-acid sequence, 359 residues long: Protein FLX-like 2 (359 aa).

Positions 1–16 are enriched in basic residues; sequence MESKGRIHPSHHHMRR. The tract at residues 1–27 is disordered; that stretch reads MESKGRIHPSHHHMRRPLPGPGGCIAH. Residues 83–236 are a coiled coil; that stretch reads HGSLRQELAA…EKLQAQLMNN (154 aa). Residues 303-359 form a disordered region; sequence TQPGYFPQRPGYNFPRGPPGSYDPTTRLPTGPYGAPFPPGPSNNTPYAGTHGNPSRR.

Belongs to the FLX family. In terms of assembly, interacts with FRI.

Functionally, has no transcriptional activation activity. This is Protein FLX-like 2 (FLXL2) from Arabidopsis thaliana (Mouse-ear cress).